Here is a 508-residue protein sequence, read N- to C-terminus: Photosystem II CP47 reaction center protein (508 aa).

6 helical membrane-spanning segments follow: residues 21 to 36, 101 to 115, 140 to 156, 203 to 218, 237 to 252, and 457 to 472; these read SVHI…WAGS, IVFS…IWHW, GIHL…FGAF, IAAG…FHLS, VLSS…AFVV, and SFAL…HGAR.

Belongs to the PsbB/PsbC family. PsbB subfamily. In terms of assembly, PSII is composed of 1 copy each of membrane proteins PsbA, PsbB, PsbC, PsbD, PsbE, PsbF, PsbH, PsbI, PsbJ, PsbK, PsbL, PsbM, PsbT, PsbX, PsbY, PsbZ, Psb30/Ycf12, at least 3 peripheral proteins of the oxygen-evolving complex and a large number of cofactors. It forms dimeric complexes. It depends on Binds multiple chlorophylls. PSII binds additional chlorophylls, carotenoids and specific lipids. as a cofactor.

It is found in the plastid. It localises to the chloroplast thylakoid membrane. One of the components of the core complex of photosystem II (PSII). It binds chlorophyll and helps catalyze the primary light-induced photochemical processes of PSII. PSII is a light-driven water:plastoquinone oxidoreductase, using light energy to abstract electrons from H(2)O, generating O(2) and a proton gradient subsequently used for ATP formation. The polypeptide is Photosystem II CP47 reaction center protein (Panax ginseng (Korean ginseng)).